The chain runs to 271 residues: 1,4-dihydroxy-2-naphthoyl-CoA synthase (271 aa).

Residues 71–75, Tyr-83, 115–119, Thr-141, Ser-147, Tyr-244, and Lys-259 each bind substrate; these read SGGDQ and YAIGG. Residue 140-142 coordinates hydrogencarbonate; sequence QTG. The span at 250 to 263 shows a compositional bias: basic and acidic residues; the sequence is KEGRDSFKEKRKPD. The interval 250–271 is disordered; that stretch reads KEGRDSFKEKRKPDFGQFPRFP.

It belongs to the enoyl-CoA hydratase/isomerase family. MenB subfamily. Requires hydrogencarbonate as cofactor.

The catalysed reaction is 2-succinylbenzoyl-CoA + H(+) = 1,4-dihydroxy-2-naphthoyl-CoA + H2O. The protein operates within quinol/quinone metabolism; 1,4-dihydroxy-2-naphthoate biosynthesis; 1,4-dihydroxy-2-naphthoate from chorismate: step 6/7. It participates in quinol/quinone metabolism; menaquinone biosynthesis. Functionally, converts o-succinylbenzoyl-CoA (OSB-CoA) to 1,4-dihydroxy-2-naphthoyl-CoA (DHNA-CoA). In Bacillus subtilis (strain 168), this protein is 1,4-dihydroxy-2-naphthoyl-CoA synthase.